The chain runs to 249 residues: 2,3-bisphosphoglycerate-dependent phosphoglycerate mutase (249 aa).

Residues 9–16, 22–23, arginine 61, 88–91, lysine 99, 115–116, and 184–185 each bind substrate; these read RHGQSQWN, TG, ERHY, RR, and GN. The active-site Tele-phosphohistidine intermediate is histidine 10. Glutamate 88 functions as the Proton donor/acceptor in the catalytic mechanism.

This sequence belongs to the phosphoglycerate mutase family. BPG-dependent PGAM subfamily. In terms of assembly, homodimer.

It carries out the reaction (2R)-2-phosphoglycerate = (2R)-3-phosphoglycerate. The protein operates within carbohydrate degradation; glycolysis; pyruvate from D-glyceraldehyde 3-phosphate: step 3/5. Catalyzes the interconversion of 2-phosphoglycerate and 3-phosphoglycerate. The sequence is that of 2,3-bisphosphoglycerate-dependent phosphoglycerate mutase from Stenotrophomonas maltophilia (strain K279a).